We begin with the raw amino-acid sequence, 194 residues long: MPNWGGGNKCGACGRTVYHAEEVQCDGRSFHRCCFLCMVCRKNLDSTTVAIHDAEVYCKSCYGKKYGPKGYGYGQGAGTLNMDRGERLGIKPESSPSPHRPTTNPNTSKFAQKFGGAEKCSRCGDSVYAAEKVIGAGKPWHKNCFRCAKCGKSLESTTLTEKEGEIYCKGCYAKNFGPKGFGYGQGAGALVHAQ.

Residues 10 to 61 (CGACGRTVYHAEEVQCDGRSFHRCCFLCMVCRKNLDSTTVAIHDAEVYCKSC) enclose the LIM zinc-binding 1 domain. The Nuclear localization signal motif lies at 64–69 (KKYGPK). Residues 85–110 (GERLGIKPESSPSPHRPTTNPNTSKF) are disordered. The segment covering 94 to 110 (SSPSPHRPTTNPNTSKF) has biased composition (polar residues). The 52-residue stretch at 120-171 (CSRCGDSVYAAEKVIGAGKPWHKNCFRCAKCGKSLESTTLTEKEGEIYCKGC) folds into the LIM zinc-binding 2 domain.

It localises to the nucleus. Interacts with zyxin. May be a component of a signal transduction pathway that mediates adhesion-stimulated changes in gene expression. Totally down-regulated in transformed cells. This Coturnix japonica (Japanese quail) protein is Cysteine and glycine-rich protein 2 (CSRP2).